Consider the following 371-residue polypeptide: Forkhead box protein E1 (371 aa).

Residues 21-53 (EERGEAAAAGAGVPAEAAGRGAGGRRRKRPLQR) are disordered. Residues 26–39 (AAAAGAGVPAEAAG) are compositionally biased toward low complexity. Positions 43-52 (GGRRRKRPLQ) are enriched in basic residues. A DNA-binding region (fork-head) is located at residues 55-149 (KPPYSYIALI…ESGSFLRRRK (95 aa)).

Post-translationally, phosphorylated. Expressed in Rathke pouch, in thyroid, and in the epithelium of the pharyngeal wall and arches, whereas it is absent in the epithelium of the pharyngeal pouches.

The protein resides in the nucleus. Its function is as follows. Transcription factor that binds consensus sites on a variety of gene promoters and activate their transcription. Involved in proper palate formation, most probably through the expression of MSX1 and TGFB3 genes which are direct targets of this transcription factor. Also implicated in thyroid gland morphogenesis. May indirectly play a role in cell growth and migration through the regulation of WNT5A expression. In Mus musculus (Mouse), this protein is Forkhead box protein E1 (Foxe1).